The sequence spans 427 residues: Histidinol dehydrogenase (427 aa).

Substrate contacts are provided by S232, Q254, and H257. Zn(2+)-binding residues include Q254 and H257. Catalysis depends on proton acceptor residues E322 and H323. Substrate-binding residues include H323, D356, E410, and H415. A Zn(2+)-binding site is contributed by D356. Residue H415 coordinates Zn(2+).

It belongs to the histidinol dehydrogenase family. Zn(2+) serves as cofactor.

It catalyses the reaction L-histidinol + 2 NAD(+) + H2O = L-histidine + 2 NADH + 3 H(+). The protein operates within amino-acid biosynthesis; L-histidine biosynthesis; L-histidine from 5-phospho-alpha-D-ribose 1-diphosphate: step 9/9. Its function is as follows. Catalyzes the sequential NAD-dependent oxidations of L-histidinol to L-histidinaldehyde and then to L-histidine. The sequence is that of Histidinol dehydrogenase from Listeria monocytogenes serotype 4b (strain F2365).